A 150-amino-acid chain; its full sequence is MAKKSVRHIKIREIISNEKIETQDELVKRLNEYELNVTQATVSRDIKELQLIKVPTPAGQYVYSLPNDRKYHPLEKLGRYLIDSFVNIDGTGNLLVLKTLPGNAQSIGAILDQIDWEDVLGTICGDDTCLIICRDDAASEKIKTRIFNLL.

Belongs to the ArgR family.

It is found in the cytoplasm. Its pathway is amino-acid biosynthesis; L-arginine biosynthesis [regulation]. Its function is as follows. Regulates arginine biosynthesis genes. The polypeptide is Arginine repressor (Staphylococcus saprophyticus subsp. saprophyticus (strain ATCC 15305 / DSM 20229 / NCIMB 8711 / NCTC 7292 / S-41)).